We begin with the raw amino-acid sequence, 532 residues long: Probable cytochrome c oxidase subunit 1 (532 aa).

8 helical membrane-spanning segments follow: residues 33-53 (IMYIIFAVFAGIVGGLFSLLF), 74-94 (VLITAHAVIMVFFMIMPALFG), 95-115 (GFGNYFVPLLIGAPDMAFPRL), 118-138 (ISFWLLVTAFILLMGSAFVDG), 163-183 (MAIFSLHLTGLSSILGSINLI), 200-220 (PLFVWSILVTAFLIILAMPVL), 252-272 (LFWFFGHPEVYIVILPGFGIV), and 284-304 (IFGYQGMVGAMVIIGFVGFIV). H79 contributes to the Fe(II)-heme a binding site. Cu cation contacts are provided by H258 and Y262. The Cu cation site is built by H307 and H308. 2 consecutive transmembrane segments (helical) span residues 318–338 (ALIYFTAGTMIIAVPTGIKIF) and 355–375 (MLFSIGFIILFTIGGVTGIIL). Residue H393 coordinates heme a3. 3 helical membrane-spanning segments follow: residues 394-414 (FHYTMSLGALFTAFAGFYYWF), 431-451 (FWITFIGVNLTFFPQHFLGLA), and 473-493 (IGAGISMAAALYFVFIVFYTL). H395 provides a ligand contact to Fe(II)-heme a.

The protein belongs to the heme-copper respiratory oxidase family.

It is found in the cell membrane. The enzyme catalyses 4 Fe(II)-[cytochrome c] + O2 + 8 H(+)(in) = 4 Fe(III)-[cytochrome c] + 2 H2O + 4 H(+)(out). Its pathway is energy metabolism; oxidative phosphorylation. In terms of biological role, cytochrome c oxidase is the component of the respiratory chain that catalyzes the reduction of oxygen to water. Subunits 1-3 form the functional core of the enzyme complex. CO I is the catalytic subunit of the enzyme. Electrons originating in cytochrome c are transferred via the copper A center of subunit 2 and heme A of subunit 1 to the bimetallic center formed by heme A3 and copper B. This Rickettsia felis (strain ATCC VR-1525 / URRWXCal2) (Rickettsia azadi) protein is Probable cytochrome c oxidase subunit 1 (ctaD).